The following is a 282-amino-acid chain: Anamorsin homolog (282 aa).

An N-terminal SAM-like domain region spans residues 1–140 (MADLQGKAVL…KPVYEVGAAA (140 aa)). Residues 141-192 (PLKLSFAKKKQSGAAAPAAQVAEVWTIATDDFDDDDLLENDGDELLDAEDLA) form a linker region. [2Fe-2S] cluster contacts are provided by C203, C214, C217, and C219. The tract at residues 203-219 (CEVGAGGKRRACKNCTC) is fe-S binding site A. The [4Fe-4S] cluster site is built by C243, C246, C254, and C257. 2 short sequence motifs (cx2C motif) span residues 243 to 246 (CGNC) and 254 to 257 (CASC). The fe-S binding site B stretch occupies residues 243-257 (CGNCYLGDAFRCASC).

This sequence belongs to the anamorsin family. In terms of assembly, monomer. The cofactor is [2Fe-2S] cluster. [4Fe-4S] cluster is required as a cofactor.

It localises to the cytoplasm. It is found in the mitochondrion intermembrane space. Component of the cytosolic iron-sulfur (Fe-S) protein assembly (CIA) machinery. Required for the maturation of extramitochondrial Fe-S proteins. Part of an electron transfer chain functioning in an early step of cytosolic Fe-S biogenesis, facilitating the de novo assembly of a [4Fe-4S] cluster on the cytosolic Fe-S scaffold complex. Electrons are transferred from NADPH via a FAD- and FMN-containing diflavin oxidoreductase. Together with the diflavin oxidoreductase, also required for the assembly of the diferric tyrosyl radical cofactor of ribonucleotide reductase (RNR), probably by providing electrons for reduction during radical cofactor maturation in the catalytic small subunit. The chain is Anamorsin homolog from Monosiga brevicollis (Choanoflagellate).